Reading from the N-terminus, the 314-residue chain is Glycerol-1-phosphate dehydrogenase [NAD(P)+] (314 aa).

Residues 52–56 and 74–77 contribute to the NAD(+) site; these read GKPLD and TSAS. D79 contributes to the substrate binding site. S83 contributes to the NAD(+) binding site. D131 is a binding site for substrate. Zn(2+) contacts are provided by D131 and H211. Residue H215 participates in substrate binding. H231 is a Zn(2+) binding site.

It belongs to the glycerol-1-phosphate dehydrogenase family. The cofactor is Zn(2+).

It is found in the cytoplasm. The enzyme catalyses sn-glycerol 1-phosphate + NAD(+) = dihydroxyacetone phosphate + NADH + H(+). It carries out the reaction sn-glycerol 1-phosphate + NADP(+) = dihydroxyacetone phosphate + NADPH + H(+). The protein operates within membrane lipid metabolism; glycerophospholipid metabolism. Functionally, catalyzes the NAD(P)H-dependent reduction of dihydroxyacetonephosphate (DHAP or glycerone phosphate) to glycerol 1-phosphate (G1P). The G1P thus generated is used as the glycerophosphate backbone of phospholipids in the cellular membranes of Archaea. The chain is Glycerol-1-phosphate dehydrogenase [NAD(P)+] from Korarchaeum cryptofilum (strain OPF8).